We begin with the raw amino-acid sequence, 403 residues long: Para-nitrophenol 4-monooxygenase (403 aa).

Residues 6–35 (GVVVVGGGPVGLLTALKLGKAGIKVVVLEA) and 279–289 (FRRGRVVLAGD) each bind FAD.

Belongs to the PheA/TfdB FAD monooxygenase family. In terms of assembly, monomer. The cofactor is FAD.

The enzyme catalyses 4-nitrophenol + NADPH + O2 + H(+) = 1,4-benzoquinone + nitrite + NADP(+) + H2O. Its pathway is xenobiotic degradation; 4-nitrophenol degradation. Its function is as follows. Involved in the degradation of para-nitrophenol (4-NP). Catalyzes oxidation of 4-nitrophenol (4-NP) at position 4 with concomitant removal of the nitro group as nitrite and production of para-benzoquinone. The protein is Para-nitrophenol 4-monooxygenase (pnpA) of Pseudomonas sp. (strain WBC-3).